The following is a 105-amino-acid chain: Phosphoribosyl-ATP pyrophosphatase (105 aa).

The protein belongs to the PRA-PH family.

It is found in the cytoplasm. It catalyses the reaction 1-(5-phospho-beta-D-ribosyl)-ATP + H2O = 1-(5-phospho-beta-D-ribosyl)-5'-AMP + diphosphate + H(+). Its pathway is amino-acid biosynthesis; L-histidine biosynthesis; L-histidine from 5-phospho-alpha-D-ribose 1-diphosphate: step 2/9. The chain is Phosphoribosyl-ATP pyrophosphatase from Roseobacter denitrificans (strain ATCC 33942 / OCh 114) (Erythrobacter sp. (strain OCh 114)).